The primary structure comprises 232 residues: Orotidine 5'-phosphate decarboxylase (232 aa).

Substrate contacts are provided by residues aspartate 11, lysine 33, 60 to 69 (DLKFHDIPNT), threonine 120, arginine 181, glutamine 190, glycine 210, and arginine 211. The active-site Proton donor is lysine 62.

Belongs to the OMP decarboxylase family. Type 1 subfamily. In terms of assembly, homodimer.

It carries out the reaction orotidine 5'-phosphate + H(+) = UMP + CO2. Its pathway is pyrimidine metabolism; UMP biosynthesis via de novo pathway; UMP from orotate: step 2/2. Catalyzes the decarboxylation of orotidine 5'-monophosphate (OMP) to uridine 5'-monophosphate (UMP). In Vibrio vulnificus (strain YJ016), this protein is Orotidine 5'-phosphate decarboxylase.